Reading from the N-terminus, the 218-residue chain is 3-dehydroquinate dehydratase (218 aa).

3-dehydroquinate is bound by residues 29-31 (EFR) and R56. H116 acts as the Proton donor/acceptor in catalysis. The active-site Schiff-base intermediate with substrate is K142. The 3-dehydroquinate site is built by R180, S200, and Q204.

Belongs to the type-I 3-dehydroquinase family. In terms of assembly, homodimer.

It catalyses the reaction 3-dehydroquinate = 3-dehydroshikimate + H2O. Its pathway is metabolic intermediate biosynthesis; chorismate biosynthesis; chorismate from D-erythrose 4-phosphate and phosphoenolpyruvate: step 3/7. Its function is as follows. Involved in the third step of the chorismate pathway, which leads to the biosynthesis of aromatic amino acids. Catalyzes the cis-dehydration of 3-dehydroquinate (DHQ) and introduces the first double bond of the aromatic ring to yield 3-dehydroshikimate. In Methanococcus maripaludis (strain C7 / ATCC BAA-1331), this protein is 3-dehydroquinate dehydratase.